The primary structure comprises 341 residues: L-threonine 3-dehydrogenase (341 aa).

C38 serves as a coordination point for Zn(2+). Residues T40 and H43 each act as charge relay system in the active site. H63, E64, C93, C96, C99, and C107 together coordinate Zn(2+). NAD(+)-binding positions include I175, D195, R200, 262–264, and 286–287; these read LGI and IY.

Belongs to the zinc-containing alcohol dehydrogenase family. Homotetramer. Zn(2+) is required as a cofactor.

Its subcellular location is the cytoplasm. It carries out the reaction L-threonine + NAD(+) = (2S)-2-amino-3-oxobutanoate + NADH + H(+). The protein operates within amino-acid degradation; L-threonine degradation via oxydo-reductase pathway; glycine from L-threonine: step 1/2. Its function is as follows. Catalyzes the NAD(+)-dependent oxidation of L-threonine to 2-amino-3-ketobutyrate. In Shigella dysenteriae serotype 1 (strain Sd197), this protein is L-threonine 3-dehydrogenase.